Reading from the N-terminus, the 3567-residue chain is Zinc finger homeobox protein 4 (3567 aa).

The residue at position 1 (M1) is an N-acetylmethionine. 4 disordered regions span residues M1–D54, L425–N480, T522–S545, and S565–S611. The segment covering I9–D28 has biased composition (polar residues). Composition is skewed to basic and acidic residues over residues E39 to D54 and K434 to N452. Positions E468 to N480 are enriched in acidic residues. C2H2-type zinc fingers lie at residues I613 to H636, L644 to H667, and F699 to H723. The C2H2-type 4; degenerate zinc-finger motif lies at W767–E789. C2H2-type zinc fingers lie at residues Y917 to H941, L973 to H995, and Y1021 to H1045. Residues E1098–P1160 form a disordered region. Composition is skewed to basic and acidic residues over residues T1120–N1132 and A1148–P1160. A Glycyl lysine isopeptide (Lys-Gly) (interchain with G-Cter in SUMO2) cross-link involves residue K1149. C2H2-type zinc fingers lie at residues Y1172–H1195 and I1201–H1224. The segment at A1254 to K1324 is disordered. The segment covering M1281–L1310 has biased composition (basic and acidic residues). Glycyl lysine isopeptide (Lys-Gly) (interchain with G-Cter in SUMO2) cross-links involve residues K1299 and K1324. C2H2-type zinc fingers lie at residues Y1352 to H1374 and T1380 to H1403. Positions E1429–K1480 are disordered. Over residues Q1433–K1453 the composition is skewed to basic and acidic residues. The segment at Y1496 to H1522 adopts a C2H2-type 12 zinc-finger fold. K1546 participates in a covalent cross-link: Glycyl lysine isopeptide (Lys-Gly) (interchain with G-Cter in SUMO2). The C2H2-type 13 zinc finger occupies Y1548 to H1572. 2 stretches are compositionally biased toward low complexity: residues T1761 to Q1772 and Q1779 to Q1791. Disordered regions lie at residues T1761–Q1791 and S1809–G1858. K1790 is covalently cross-linked (Glycyl lysine isopeptide (Lys-Gly) (interchain with G-Cter in SUMO2)). A compositionally biased stretch (basic and acidic residues) spans S1809–S1845. The C2H2-type 14 zinc-finger motif lies at L1901 to H1924. Residues Y1948 to L2024 form a disordered region. Composition is skewed to pro residues over residues P1955–P1974 and Q1991–P2019. DNA-binding regions (homeobox) lie at residues F2084–N2143 and K2181–Y2240. A C2H2-type 15; degenerate zinc finger spans residues Y2267–Y2291. 2 disordered regions span residues Q2289–T2311 and A2328–Q2431. Residues D2293–D2309 show a composition bias toward acidic residues. Residues A2331 to P2345 show a composition bias toward low complexity. A compositionally biased stretch (basic and acidic residues) spans P2352 to Q2370. Residues S2419–Q2431 show a composition bias toward polar residues. The C2H2-type 16 zinc-finger motif lies at Y2448–H2470. The span at L2507–A2530 shows a compositional bias: polar residues. The interval L2507–R2564 is disordered. Basic and acidic residues predominate over residues R2535–R2559. The segment at residues D2560–Q2619 is a DNA-binding region (homeobox 3). The segment at K2630–H2653 adopts a C2H2-type 17 zinc-finger fold. S2663 bears the Phosphoserine mark. Positions A2764–S2785 are enriched in polar residues. Disordered stretches follow at residues A2764–T2811 and H2829–K2885. Basic and acidic residues predominate over residues F2830–Q2839. Over residues P2862–F2874 the composition is skewed to low complexity. Residues H2884–K2943 constitute a DNA-binding region (homeobox 4). The segment at P2962–H2986 adopts a C2H2-type 18 zinc-finger fold. Low complexity predominate over residues S3092–L3110. Disordered stretches follow at residues S3092–K3172 and L3281–K3337. The segment covering Q3111–S3125 has biased composition (pro residues). The segment covering S3126–Q3135 has biased composition (polar residues). The span at I3153–K3172 shows a compositional bias: basic and acidic residues. K3154 is covalently cross-linked (Glycyl lysine isopeptide (Lys-Gly) (interchain with G-Cter in SUMO2)). Positions A3265–K3294 form a coiled coil. The span at L3281–Q3293 shows a compositional bias: low complexity. Over residues K3294 to A3314 the composition is skewed to polar residues. Positions S3315–K3337 are enriched in basic and acidic residues. Residues F3354–Y3378 form a C2H2-type 19; degenerate zinc finger. The segment at Y3398–H3422 adopts a C2H2-type 20 zinc-finger fold. 2 disordered regions span residues H3443 to S3462 and S3511 to Q3534. Over residues S3447 to S3462 the composition is skewed to low complexity.

The protein belongs to the krueppel C2H2-type zinc-finger protein family. Expressed in brain, skeletal muscle and liver. Very low expression in stomach.

It is found in the nucleus. Its function is as follows. May play a role in neural and muscle differentiation. May be involved in transcriptional regulation. The sequence is that of Zinc finger homeobox protein 4 (ZFHX4) from Homo sapiens (Human).